The primary structure comprises 291 residues: Formamidopyrimidine-DNA glycosylase (291 aa).

Pro-2 acts as the Schiff-base intermediate with DNA in catalysis. Glu-3 (proton donor) is an active-site residue. The Proton donor; for beta-elimination activity role is filled by Lys-61. The DNA site is built by His-103, Arg-123, and Arg-165. The FPG-type zinc finger occupies 251–285 (EVYGRGGQACSRCASTIRRDAFMNRSSFSCPACQP). Arg-275 acts as the Proton donor; for delta-elimination activity in catalysis.

This sequence belongs to the FPG family. In terms of assembly, monomer. Zn(2+) serves as cofactor.

The catalysed reaction is Hydrolysis of DNA containing ring-opened 7-methylguanine residues, releasing 2,6-diamino-4-hydroxy-5-(N-methyl)formamidopyrimidine.. The enzyme catalyses 2'-deoxyribonucleotide-(2'-deoxyribose 5'-phosphate)-2'-deoxyribonucleotide-DNA = a 3'-end 2'-deoxyribonucleotide-(2,3-dehydro-2,3-deoxyribose 5'-phosphate)-DNA + a 5'-end 5'-phospho-2'-deoxyribonucleoside-DNA + H(+). Involved in base excision repair of DNA damaged by oxidation or by mutagenic agents. Acts as a DNA glycosylase that recognizes and removes damaged bases. Has a preference for oxidized purines, such as 7,8-dihydro-8-oxoguanine (8-oxoG). Has AP (apurinic/apyrimidinic) lyase activity and introduces nicks in the DNA strand. Cleaves the DNA backbone by beta-delta elimination to generate a single-strand break at the site of the removed base with both 3'- and 5'-phosphates. The sequence is that of Formamidopyrimidine-DNA glycosylase from Parafrankia sp. (strain EAN1pec).